The chain runs to 78 residues: U-scoloptoxin(04)-Er1a (78 aa).

Residues 1 to 24 (MTRHLIFAAVLLVCLFVCWNAIGA) form the signal peptide. A propeptide spanning residues 25-28 (QDAR) is cleaved from the precursor.

Belongs to the scoloptoxin-04 family. Post-translationally, contains 2 disulfide bonds. As to expression, expressed by the venom gland.

It localises to the secreted. This chain is U-scoloptoxin(04)-Er1a, found in Ethmostigmus rubripes (Giant centipede).